The following is a 165-amino-acid chain: uncharacterized protein (165 aa).

The next 5 helical transmembrane spans lie at Gly-30–Gly-50, Gly-65–Leu-85, Ser-86–Gly-106, Phe-108–Gly-128, and Trp-131–Gly-151.

It to E.coli YcdZ.

It localises to the cell membrane. This is an uncharacterized protein from Escherichia coli (strain K12).